A 63-amino-acid polypeptide reads, in one-letter code: Kappa-theraphotoxin-Gr3a (63 aa).

The first 21 residues, 1-21, serve as a signal peptide directing secretion; it reads MKTSVFVLVLGLVLLFAVSFA. Positions 22-29 are excised as a propeptide; that stretch reads TEMEESAR. Cystine bridges form between Cys-31–Cys-45, Cys-38–Cys-50, and Cys-44–Cys-57.

It belongs to the neurotoxin 10 (Hwtx-1) family. 63 (VsTx1) subfamily. Expressed by the venom gland.

It localises to the secreted. In terms of biological role, inhibits sodium channels Nav1.7/SCN9A and potassium channels Kv11.1/KCNH2. Also binds the voltage-sensor domain of the potassium channel KvAP (from the archaeon Aeropyrum pernix) with very slow apparent binding kinetics and affects channel gating. Reaches its target by dynamically partitioning into anionic or zwitterionic headgroup lipid membranes. May bind to the open state of KvAP. This chain is Kappa-theraphotoxin-Gr3a, found in Grammostola rosea (Chilean rose tarantula).